The primary structure comprises 105 residues: Thioredoxin (105 aa).

Residues 2-105 (VKQIESKYAF…KLEATINELI (104 aa)) form the Thioredoxin domain. An N6-acetyllysine modification is found at lysine 3. Lysine 8 is modified (N6-succinyllysine). Active-site nucleophile residues include cysteine 32 and cysteine 35. Cysteine 32 and cysteine 35 are disulfide-bonded. The residue at position 39 (lysine 39) is an N6-acetyllysine. S-nitrosocysteine occurs at positions 62 and 69. Cysteine 73 is modified (S-nitrosocysteine; alternate). Lysine 94 is subject to N6-acetyllysine; alternate. Lysine 94 bears the N6-succinyllysine; alternate mark.

This sequence belongs to the thioredoxin family. Homodimer; disulfide-linked. Interacts with TXNIP through the redox-active site. Interacts with MAP3K5 and CASP3. Interacts with APEX1; the interaction stimulates the FOS/JUN AP-1 DNA-binding activity in a redox-dependent manner. In terms of processing, in the fully reduced protein, both Cys-69 and Cys-73 are nitrosylated in response to nitric oxide (NO). When two disulfide bonds are present in the protein, only Cys-73 is nitrosylated. Cys-73 can serve as donor for nitrosylation of target proteins.

The protein localises to the nucleus. The protein resides in the cytoplasm. Its subcellular location is the secreted. Functionally, participates in various redox reactions through the reversible oxidation of its active center dithiol to a disulfide and catalyzes dithiol-disulfide exchange reactions. Plays a role in the reversible S-nitrosylation of cysteine residues in target proteins, and thereby contributes to the response to intracellular nitric oxide. Nitrosylates the active site Cys of CASP3 in response to nitric oxide (NO), and thereby inhibits caspase-3 activity. Induces the FOS/JUN AP-1 DNA binding activity in ionizing radiation (IR) cells through its oxidation/reduction status and stimulates AP-1 transcriptional activity. The sequence is that of Thioredoxin (TXN) from Bos taurus (Bovine).